The sequence spans 216 residues: Transmembrane emp24 domain-containing protein eca (216 aa).

Residues Met-1–Gly-20 form the signal peptide. Topologically, residues Leu-21–Ser-182 are lumenal. The GOLD domain maps to Arg-30–Val-126. A coiled-coil region spans residues Ala-134–Asn-164. A helical transmembrane segment spans residues Arg-183 to Met-203. The Cytoplasmic portion of the chain corresponds to Arg-204 to Val-216. A Prevents secretion from ER motif is present at residues Lys-213–Val-216.

It belongs to the EMP24/GP25L family.

The protein localises to the endoplasmic reticulum membrane. Functionally, eca and bai are essential, though not redundant, for dorsoventral patterning of the embryo. Specifically required during early embryogenesis for the activity of maternal tkv, while the zygotic tkv is not affected. Involved in Golgi organization. In Drosophila ananassae (Fruit fly), this protein is Transmembrane emp24 domain-containing protein eca.